The sequence spans 246 residues: 14-3-3 protein beta/alpha (246 aa).

Met-1 bears the N-acetylmethionine mark. Position 2 is an N-acetylthreonine; in 14-3-3 protein beta/alpha, N-terminally processed (Thr-2). Thr-2 carries the phosphothreonine modification. Lys-5 carries the post-translational modification N6-acetyllysine. Lys-51 carries the N6-acetyllysine; alternate modification. Residue Lys-51 forms a Glycyl lysine isopeptide (Lys-Gly) (interchain with G-Cter in SUMO2); alternate linkage. Ser-60 bears the Phosphoserine mark. Lys-70 carries the post-translational modification N6-acetyllysine. 3'-nitrotyrosine is present on residues Tyr-84 and Tyr-106. At Lys-117 the chain carries N6-acetyllysine. Ser-186 and Ser-232 each carry phosphoserine.

Belongs to the 14-3-3 family. As to quaternary structure, homodimer. Interacts with SAMSN1 and PRKCE. Interacts with AKAP13. Interacts with SSH1 and TORC2/CRTC2. Interacts with ABL1; the interaction results in cytoplasmic location of ABL1 and inhibition of cABL-mediated apoptosis. Interacts with ROR2 (dimer); the interaction results in phosphorylation of YWHAB on tyrosine residues. Interacts with GAB2. Interacts with YAP1 (phosphorylated form). Interacts with the phosphorylated (by AKT1) form of SRPK2. Interacts with PKA-phosphorylated AANAT. Interacts with MYO1C. Interacts with SIRT2. Interacts with the 'Thr-369' phosphorylated form of DAPK2. Interacts with PI4KB, TBC1D22A and TBC1D22B. Interacts with the 'Ser-1134' and 'Ser-1161' phosphorylated form of SOS1. Interacts (via phosphorylated form) with YWHAB; this interaction occurs in a protein kinase AKT1-dependent manner. Interacts with SLITRK1. Interacts with SYNPO2 (phosphorylated form); YWHAB competes with ACTN2 for interaction with SYNPO2. Interacts with RIPOR2 (via phosphorylated form); this interaction occurs in a chemokine-dependent manner and does not compete for binding of RIPOR2 with RHOA nor blocks inhibition of RIPOR2-mediated RHOA activity. Interacts with MARK2 and MARK3. Interacts with TESK1; the interaction is dependent on the phosphorylation of TESK1 'Ser-439' and inhibits TESK1 kinase activity. Interacts with MEFV. Interacts with HDAC4. Interacts with ADAM22 (via C-terminus). Post-translationally, isoform alpha differs from isoform beta in being phosphorylated. Phosphorylated on Ser-60 by protein kinase C delta type catalytic subunit in a sphingosine-dependent fashion. Isoform Short contains a N-acetylmethionine at position 1.

Its subcellular location is the cytoplasm. It localises to the melanosome. Its function is as follows. Adapter protein implicated in the regulation of a large spectrum of both general and specialized signaling pathways. Binds to a large number of partners, usually by recognition of a phosphoserine or phosphothreonine motif. Binding generally results in the modulation of the activity of the binding partner. Negative regulator of osteogenesis. Blocks the nuclear translocation of the phosphorylated form (by AKT1) of SRPK2 and antagonizes its stimulatory effect on cyclin D1 expression resulting in blockage of neuronal apoptosis elicited by SRPK2. Negative regulator of signaling cascades that mediate activation of MAP kinases via AKAP13. This is 14-3-3 protein beta/alpha (Ywhab) from Mus musculus (Mouse).